The following is a 355-amino-acid chain: Ataxin-3-like protein (355 aa).

The Josephin domain maps to 1–180 (MDFIFHEKQE…DCEADQLLQI (180 aa)). The active-site Nucleophile is the cysteine 14. Histidine 119 (proton acceptor) is an active-site residue. Asparagine 134 is an active-site residue. 2 disordered regions span residues 209–230 (LEKV…EDFQ) and 253–331 (LSMQ…DISE). The span at 215–228 (ESDESGTSDQDEED) shows a compositional bias: acidic residues. UIM domains lie at 224–243 (QDEE…TNRE) and 244–258 (DEHL…MQGS). Polar residues predominate over residues 253-276 (LSMQGSSGNTSQDLPKTSCVTPAS). Basic and acidic residues predominate over residues 278–293 (QPKKIKEDYFEKHQQE).

As to expression, widely expressed.

It is found in the nucleus. It catalyses the reaction Thiol-dependent hydrolysis of ester, thioester, amide, peptide and isopeptide bonds formed by the C-terminal Gly of ubiquitin (a 76-residue protein attached to proteins as an intracellular targeting signal).. Deubiquitinating enzyme that cleaves both 'Lys-48'-linked and 'Lys-63'-linked poly-ubiquitin chains (in vitro). Acts as a deubiquitinating enzyme for the transcription factor KLF5, playing a role in the regulation of KLF5 stability. The sequence is that of Ataxin-3-like protein from Homo sapiens (Human).